The chain runs to 456 residues: MTOR-associated protein MEAK7 (456 aa).

The N-myristoyl glycine moiety is linked to residue G2. A TLDc domain is found at 244-412 (SILDVLSVMY…FDKMEVWAVG (169 aa)).

As to quaternary structure, interacts (via C-terminal domain) with MTOR and MLST8; the interaction with MTOR increases upon nutrient stimulation.

Its subcellular location is the membrane. The protein localises to the cytoplasm. It is found in the lysosome. Its function is as follows. Activates an alternative mTOR signaling through RPS6KB2 activation and EIF4EBP1 repression to regulate cell proliferation and migration. Recruits MTOR at the lysosome, essential for MTOR signaling at the lysosome. This is MTOR-associated protein MEAK7 from Homo sapiens (Human).